The following is a 207-amino-acid chain: LexA repressor (207 aa).

Positions 28-48 form a DNA-binding region, H-T-H motif; that stretch reads VREIGEAVGLASSSTVHGHLA. Catalysis depends on for autocatalytic cleavage activity residues S129 and K167.

This sequence belongs to the peptidase S24 family. Homodimer.

It catalyses the reaction Hydrolysis of Ala-|-Gly bond in repressor LexA.. Its function is as follows. Represses a number of genes involved in the response to DNA damage (SOS response), including recA and lexA. In the presence of single-stranded DNA, RecA interacts with LexA causing an autocatalytic cleavage which disrupts the DNA-binding part of LexA, leading to derepression of the SOS regulon and eventually DNA repair. The sequence is that of LexA repressor from Geobacillus sp. (strain WCH70).